Reading from the N-terminus, the 181-residue chain is Large ribosomal subunit protein uL10 (181 aa).

The protein belongs to the universal ribosomal protein uL10 family. Part of the ribosomal stalk of the 50S ribosomal subunit. The N-terminus interacts with L11 and the large rRNA to form the base of the stalk. The C-terminus forms an elongated spine to which L12 dimers bind in a sequential fashion forming a multimeric L10(L12)X complex.

In terms of biological role, forms part of the ribosomal stalk, playing a central role in the interaction of the ribosome with GTP-bound translation factors. The polypeptide is Large ribosomal subunit protein uL10 (Nostoc sp. (strain PCC 7120 / SAG 25.82 / UTEX 2576)).